Here is a 372-residue protein sequence, read N- to C-terminus: tRNA-specific 2-thiouridylase MnmA (372 aa).

ATP contacts are provided by residues 16–23 (GMSGGVDS) and Met-42. The interval 102–104 (NPD) is interaction with target base in tRNA. Cys-107 acts as the Nucleophile in catalysis. Residues Cys-107 and Cys-205 are joined by a disulfide bond. Gly-132 is a binding site for ATP. The segment at 155–157 (KDQ) is interaction with tRNA. Residue Cys-205 is the Cysteine persulfide intermediate of the active site. An interaction with tRNA region spans residues 317-318 (RY).

This sequence belongs to the MnmA/TRMU family.

It is found in the cytoplasm. The enzyme catalyses S-sulfanyl-L-cysteinyl-[protein] + uridine(34) in tRNA + AH2 + ATP = 2-thiouridine(34) in tRNA + L-cysteinyl-[protein] + A + AMP + diphosphate + H(+). In terms of biological role, catalyzes the 2-thiolation of uridine at the wobble position (U34) of tRNA, leading to the formation of s(2)U34. In Shewanella baltica (strain OS185), this protein is tRNA-specific 2-thiouridylase MnmA.